Reading from the N-terminus, the 135-residue chain is Small ribosomal subunit protein bS6 (135 aa).

A disordered region spans residues 104–135 (FSRLDRNGHIGHDEKHPRSPSRQREDVIEGVE).

The protein belongs to the bacterial ribosomal protein bS6 family.

Binds together with bS18 to 16S ribosomal RNA. The polypeptide is Small ribosomal subunit protein bS6 (Bartonella henselae (strain ATCC 49882 / DSM 28221 / CCUG 30454 / Houston 1) (Rochalimaea henselae)).